Reading from the N-terminus, the 402-residue chain is B3 domain-containing protein Os01g0723500 (402 aa).

The segment at residues 18 to 121 (RPHFFKVLVG…RFTAMVFDRT (104 aa)) is a DNA-binding region (TF-B3 1). Positions 126 to 203 (EDLMGGGGGD…VKNEEDADEL (78 aa)) are disordered. The span at 152 to 162 (DAARPKKDSVG) shows a compositional bias: basic and acidic residues. Over residues 173–186 (SGGQPLQIVDSSWT) the composition is skewed to polar residues. Positions 289 to 381 (CVIRMSTMHV…EFRVHIFRVV (93 aa)) form a DNA-binding region, TF-B3 2.

It is found in the nucleus. The protein is B3 domain-containing protein Os01g0723500 of Oryza sativa subsp. japonica (Rice).